The following is a 706-amino-acid chain: Heat shock protein 75 kDa, mitochondrial (706 aa).

Residues 1–60 constitute a mitochondrion transit peptide; sequence MARELRALLLWGRGLQSALRAPALAGVRRGKPVLHLQKTTVHFRDPTQSLASGISAGQLY. ATP is bound by residues Asn-121 and Asp-160. Ser-172 bears the Phosphoserine mark. Asn-173 is a binding site for ATP. Position 176 is a phosphothreonine (Thr-176). Ser-196 is subject to Phosphoserine. Phe-207 provides a ligand contact to ATP. An N6-acetyllysine mark is found at Lys-264, Lys-326, and Lys-334. Arg-404 contacts ATP. Lys-426, Lys-433, and Lys-468 each carry N6-acetyllysine. Phosphothreonine is present on Thr-496. Ser-570 carries the post-translational modification Phosphoserine.

This sequence belongs to the heat shock protein 90 family. In terms of assembly, binds to the intracellular domain of tumor necrosis factor type 1 receptor. Binds to RB1. Interacts with SRC. Interacts with SDHA.

The protein resides in the mitochondrion. It is found in the mitochondrion inner membrane. Its subcellular location is the mitochondrion matrix. Functionally, chaperone that expresses an ATPase activity. Involved in maintaining mitochondrial function and polarization, downstream of PINK1 and mitochondrial complex I. Is a negative regulator of mitochondrial respiration able to modulate the balance between oxidative phosphorylation and aerobic glycolysis. The impact of TRAP1 on mitochondrial respiration is probably mediated by modulation of mitochondrial SRC and inhibition of SDHA. This chain is Heat shock protein 75 kDa, mitochondrial (Trap1), found in Rattus norvegicus (Rat).